Here is a 250-residue protein sequence, read N- to C-terminus: Triosephosphate isomerase (250 aa).

9-11 is a substrate binding site; the sequence is NWK. His-94 acts as the Electrophile in catalysis. The active-site Proton acceptor is Glu-165. Residues Gly-171, Ser-211, and 232 to 233 each bind substrate; that span reads GG.

It belongs to the triosephosphate isomerase family. Homodimer.

It localises to the cytoplasm. The enzyme catalyses D-glyceraldehyde 3-phosphate = dihydroxyacetone phosphate. It functions in the pathway carbohydrate biosynthesis; gluconeogenesis. The protein operates within carbohydrate degradation; glycolysis; D-glyceraldehyde 3-phosphate from glycerone phosphate: step 1/1. Involved in the gluconeogenesis. Catalyzes stereospecifically the conversion of dihydroxyacetone phosphate (DHAP) to D-glyceraldehyde-3-phosphate (G3P). In Alkalilimnicola ehrlichii (strain ATCC BAA-1101 / DSM 17681 / MLHE-1), this protein is Triosephosphate isomerase.